Consider the following 417-residue polypeptide: MLRKLANQSLSVAGKWQQQQLRRLNIHEYQGAELMSKYGINVPKGVAVASLDEVKKAIQDVFPNQSEVVVKSQVLAGGRGLGTFKNGFQGGVHIVKADQAEDIASKMLGQILVTKQTGAQGKVVSKVYLCEKMSLVNEMYFSIILDRATAGPLIIACRKGGTSIEDLAEKFPDMIIKVPIDVFKGISDADAAKVVDGLAPKVADRNDSIEQVKKLYKLFCETDCTMLEINPLAETSDNKLVAADAKLNFDDNAAYRQKEIFSLRDSSQEDPREVAAAKADLNYIGLDGEIGCMVNGAGLAMATMDIIKLHGGTPANFLDVGGNATEGQVVEAFKILTADEKVKAILVNIFGGIMKCDVIASGIVNAAKQVQLKVPVIVRLEGTNVEQGKRILKESGMKLITAEDLDDAAEKAVKALA.

The N-terminal 24 residues, 1–24, are a transit peptide targeting the mitochondrion; the sequence is MLRKLANQSLSVAGKWQQQQLRRL. In terms of domain architecture, ATP-grasp spans 32–275; it reads AELMSKYGIN…SSQEDPREVA (244 aa). Residues lysine 71, 78 to 80, and glutamate 138 contribute to the ATP site; that span reads GRG. Mg(2+) contacts are provided by asparagine 230 and aspartate 244. Substrate-binding positions include asparagine 295 and 352-354; that span reads GIM.

It belongs to the succinate/malate CoA ligase beta subunit family. Heterodimer of an alpha and a beta subunit. Mg(2+) is required as a cofactor. In terms of tissue distribution, expressed in roots, stems, flowers, leaves and fruits.

It is found in the mitochondrion. It catalyses the reaction succinate + ATP + CoA = succinyl-CoA + ADP + phosphate. It functions in the pathway carbohydrate metabolism; tricarboxylic acid cycle; succinate from succinyl-CoA (ligase route): step 1/1. In terms of biological role, succinyl-CoA synthetase functions in the citric acid cycle (TCA), coupling the hydrolysis of succinyl-CoA to the synthesis of ATP and thus represents the only step of substrate-level phosphorylation in the TCA. The beta subunit provides nucleotide specificity of the enzyme and binds the substrate succinate, while the binding sites for coenzyme A and phosphate are found in the alpha subunit. The protein is Succinate--CoA ligase [ADP-forming] subunit beta, mitochondrial of Solanum lycopersicum (Tomato).